A 371-amino-acid polypeptide reads, in one-letter code: Putative HAD-like hydrolase Noc_2718 (371 aa).

The HAD-like hydrolase stretch occupies residues 1–288; it reads MKQKILLCSD…TGREESAEEE (288 aa). Residues 291–371 form the YcgL domain; sequence QSCAIYRSCK…QLSSREYRRS (81 aa).

In the N-terminal section; belongs to the HAD-like hydrolase superfamily.

The chain is Putative HAD-like hydrolase Noc_2718 from Nitrosococcus oceani (strain ATCC 19707 / BCRC 17464 / JCM 30415 / NCIMB 11848 / C-107).